The primary structure comprises 119 residues: uncharacterized protein (119 aa).

This is an uncharacterized protein from Vaccinia virus (strain Copenhagen) (VACV).